We begin with the raw amino-acid sequence, 362 residues long: Aminomethyltransferase (362 aa).

It belongs to the GcvT family. In terms of assembly, the glycine cleavage system is composed of four proteins: P, T, L and H.

The enzyme catalyses N(6)-[(R)-S(8)-aminomethyldihydrolipoyl]-L-lysyl-[protein] + (6S)-5,6,7,8-tetrahydrofolate = N(6)-[(R)-dihydrolipoyl]-L-lysyl-[protein] + (6R)-5,10-methylene-5,6,7,8-tetrahydrofolate + NH4(+). In terms of biological role, the glycine cleavage system catalyzes the degradation of glycine. This chain is Aminomethyltransferase, found in Listeria innocua serovar 6a (strain ATCC BAA-680 / CLIP 11262).